We begin with the raw amino-acid sequence, 209 residues long: Imidazole glycerol phosphate synthase subunit HisH (209 aa).

The region spanning 1–205 (MIAIIDYGMG…KGVVKQWKSS (205 aa)) is the Glutamine amidotransferase type-1 domain. C79 acts as the Nucleophile in catalysis. Catalysis depends on residues H180 and E182.

In terms of assembly, heterodimer of HisH and HisF.

The protein localises to the cytoplasm. The catalysed reaction is 5-[(5-phospho-1-deoxy-D-ribulos-1-ylimino)methylamino]-1-(5-phospho-beta-D-ribosyl)imidazole-4-carboxamide + L-glutamine = D-erythro-1-(imidazol-4-yl)glycerol 3-phosphate + 5-amino-1-(5-phospho-beta-D-ribosyl)imidazole-4-carboxamide + L-glutamate + H(+). It catalyses the reaction L-glutamine + H2O = L-glutamate + NH4(+). The protein operates within amino-acid biosynthesis; L-histidine biosynthesis; L-histidine from 5-phospho-alpha-D-ribose 1-diphosphate: step 5/9. Its function is as follows. IGPS catalyzes the conversion of PRFAR and glutamine to IGP, AICAR and glutamate. The HisH subunit catalyzes the hydrolysis of glutamine to glutamate and ammonia as part of the synthesis of IGP and AICAR. The resulting ammonia molecule is channeled to the active site of HisF. The polypeptide is Imidazole glycerol phosphate synthase subunit HisH (Bacillus cytotoxicus (strain DSM 22905 / CIP 110041 / 391-98 / NVH 391-98)).